Here is a 308-residue protein sequence, read N- to C-terminus: F420-non-reducing hydrogenase subunit G (308 aa).

Belongs to the [NiFe]/[NiFeSe] hydrogenase small subunit family. The F420-non-reducing hydrogenase is composed of three subunits; MvhA, MvhD and MvhG. It forms a complex with the heterodisulfide reductase (hdr).

In terms of biological role, part of a complex that provides reducing equivalents for heterodisulfide reductase. In Methanothermobacter marburgensis (strain ATCC BAA-927 / DSM 2133 / JCM 14651 / NBRC 100331 / OCM 82 / Marburg) (Methanobacterium thermoautotrophicum), this protein is F420-non-reducing hydrogenase subunit G (mvhG).